The following is a 162-amino-acid chain: MRSKFKDEHPFEKRKAEAERIRQKYSDRIPPSPHSPASRLIGGAPRPPVITADLVSTVEDSAPLTKAFAVQVICEKVEKSDIATIDKKKYLVPADLTVGQFVYVIRKRIKLSPEKAIFIFVDEVLPPTAALMSSIYEEHKDEDGFLYITYSGENTFGGFETA.

The span at 1–27 shows a compositional bias: basic and acidic residues; that stretch reads MRSKFKDEHPFEKRKAEAERIRQKYSD. Positions 1–42 are disordered; that stretch reads MRSKFKDEHPFEKRKAEAERIRQKYSDRIPPSPHSPASRLIG. Gly157 is lipidated: Phosphatidylethanolamine amidated glycine. A propeptide spans 158 to 162 (removed in mature form); sequence GFETA.

The protein belongs to the ATG8 family.

The protein resides in the cytoplasmic vesicle. Its subcellular location is the autophagosome membrane. The protein localises to the vacuole membrane. Its function is as follows. Ubiquitin-like modifier involved in autophagosome formation. With ATG4, mediates the delivery of the autophagosomes to the vacuole via the microtubule cytoskeleton. Required for selective autophagic degradation of the nucleus (nucleophagy) as well as for mitophagy which contributes to regulate mitochondrial quantity and quality by eliminating the mitochondria to a basal level to fulfill cellular energy requirements and preventing excess ROS production. Also participates in membrane fusion events that take place in the early secretory pathway. Also involved in endoplasmic reticulum-specific autophagic process and is essential for the survival of cells subjected to severe ER stress. The ATG8-PE conjugate mediates tethering between adjacent membranes and stimulates membrane hemifusion, leading to expansion of the autophagosomal membrane during autophagy. The sequence is that of Autophagy-related protein 8 from Colletotrichum higginsianum (strain IMI 349063) (Crucifer anthracnose fungus).